The sequence spans 366 residues: tRNA/tmRNA (uracil-C(5))-methyltransferase (366 aa).

S-adenosyl-L-methionine contacts are provided by Gln-190, Tyr-218, Asn-223, Glu-239, and Asp-299. The active-site Nucleophile is Cys-324. The Proton acceptor role is filled by Glu-358.

The protein belongs to the class I-like SAM-binding methyltransferase superfamily. RNA M5U methyltransferase family. TrmA subfamily.

The catalysed reaction is uridine(54) in tRNA + S-adenosyl-L-methionine = 5-methyluridine(54) in tRNA + S-adenosyl-L-homocysteine + H(+). It carries out the reaction uridine(341) in tmRNA + S-adenosyl-L-methionine = 5-methyluridine(341) in tmRNA + S-adenosyl-L-homocysteine + H(+). Dual-specificity methyltransferase that catalyzes the formation of 5-methyluridine at position 54 (m5U54) in all tRNAs, and that of position 341 (m5U341) in tmRNA (transfer-mRNA). The protein is tRNA/tmRNA (uracil-C(5))-methyltransferase of Escherichia fergusonii (strain ATCC 35469 / DSM 13698 / CCUG 18766 / IAM 14443 / JCM 21226 / LMG 7866 / NBRC 102419 / NCTC 12128 / CDC 0568-73).